The following is a 484-amino-acid chain: Coronin-1B (484 aa).

Serine 2 is subject to Phosphoserine. WD repeat units follow at residues 80–120 (GHTG…LTSP), 130–170 (GHTK…ELYR), 174–213 (LHPD…LVAE), 217–260 (AHEG…EPMA), and 265–305 (DSSN…PYIH). The interval 404 to 446 (LKVSRRNVLSDSRPASYSRSGASTATAVTDVPSGNLAGAGEAG) is disordered. A compositionally biased stretch (polar residues) spans 410–430 (NVLSDSRPASYSRSGASTATA). The stretch at 444–482 (EAGKLEEVMQELRALRMLVKEQGERISRLEEQLGRMENG) forms a coiled coil.

This sequence belongs to the WD repeat coronin family. In terms of assembly, forms homooligomers, but does not form complexes with the other coronins. Interacts with Arp2/3 complex components, including ACTR2, ARPC1B and ARPC2. Binds actin. Phosphorylation on Ser-2 regulates the interaction with the Arp2/3 complex and cell motility in fibroblasts. Phosphorylation does not seem to affect subcellular location. Ubiquitous.

The protein localises to the cytoplasm. The protein resides in the cytoskeleton. It localises to the stress fiber. In terms of biological role, regulates leading edge dynamics and cell motility in fibroblasts. May be involved in cytokinesis and signal transduction. The sequence is that of Coronin-1B (Coro1b) from Mus musculus (Mouse).